Consider the following 699-residue polypeptide: Elongation factor G (699 aa).

The tr-type G domain occupies 8–288 (EDYRNFGIMA…AVVDYLPSPI (281 aa)). GTP contacts are provided by residues 17–24 (AHIDAGKT), 86–90 (DTPGH), and 140–143 (NKMD).

The protein belongs to the TRAFAC class translation factor GTPase superfamily. Classic translation factor GTPase family. EF-G/EF-2 subfamily.

It is found in the cytoplasm. Catalyzes the GTP-dependent ribosomal translocation step during translation elongation. During this step, the ribosome changes from the pre-translocational (PRE) to the post-translocational (POST) state as the newly formed A-site-bound peptidyl-tRNA and P-site-bound deacylated tRNA move to the P and E sites, respectively. Catalyzes the coordinated movement of the two tRNA molecules, the mRNA and conformational changes in the ribosome. This Sinorhizobium fredii (strain NBRC 101917 / NGR234) protein is Elongation factor G.